A 618-amino-acid chain; its full sequence is DNA mismatch repair protein MutL (618 aa).

The protein belongs to the DNA mismatch repair MutL/HexB family.

In terms of biological role, this protein is involved in the repair of mismatches in DNA. It is required for dam-dependent methyl-directed DNA mismatch repair. May act as a 'molecular matchmaker', a protein that promotes the formation of a stable complex between two or more DNA-binding proteins in an ATP-dependent manner without itself being part of a final effector complex. This is DNA mismatch repair protein MutL from Porphyromonas gingivalis (strain ATCC 33277 / DSM 20709 / CIP 103683 / JCM 12257 / NCTC 11834 / 2561).